Reading from the N-terminus, the 88-residue chain is Large ribosomal subunit protein bL27 (88 aa).

The interval 1 to 21 (MAHKKGASSSRNGRDSAAHRL) is disordered.

Belongs to the bacterial ribosomal protein bL27 family.

This Mycobacterium ulcerans (strain Agy99) protein is Large ribosomal subunit protein bL27.